Reading from the N-terminus, the 138-residue chain is MAANFLKSLFGEEDIDEQDGLYETSEQVSTPANTSNKVVSINSGRLNQMSQISLYEPRLYADVKQIASQLLEGHAVIVNFTQMDANVAARLVDFLNGTVFAIDGEMKRIGKEIFLCTPKNYEISGSLTSNLKNDGDKF.

It belongs to the SepF family. In terms of assembly, homodimer. Interacts with FtsZ.

It localises to the cytoplasm. Functionally, cell division protein that is part of the divisome complex and is recruited early to the Z-ring. Probably stimulates Z-ring formation, perhaps through the cross-linking of FtsZ protofilaments. Its function overlaps with FtsA. The protein is Cell division protein SepF of Limosilactobacillus reuteri (strain DSM 20016) (Lactobacillus reuteri).